Reading from the N-terminus, the 235-residue chain is Ubiquinone biosynthesis O-methyltransferase (235 aa).

R36, G56, D77, and M122 together coordinate S-adenosyl-L-methionine.

Belongs to the methyltransferase superfamily. UbiG/COQ3 family.

The catalysed reaction is a 3-demethylubiquinol + S-adenosyl-L-methionine = a ubiquinol + S-adenosyl-L-homocysteine + H(+). It carries out the reaction a 3-(all-trans-polyprenyl)benzene-1,2-diol + S-adenosyl-L-methionine = a 2-methoxy-6-(all-trans-polyprenyl)phenol + S-adenosyl-L-homocysteine + H(+). The protein operates within cofactor biosynthesis; ubiquinone biosynthesis. O-methyltransferase that catalyzes the 2 O-methylation steps in the ubiquinone biosynthetic pathway. The protein is Ubiquinone biosynthesis O-methyltransferase of Leptothrix cholodnii (strain ATCC 51168 / LMG 8142 / SP-6) (Leptothrix discophora (strain SP-6)).